The following is a 546-amino-acid chain: Elongator complex protein 3 (546 aa).

The Radical SAM core domain maps to 81–371 (RTASGIAVVA…YRVQRDIPMP (291 aa)). 3 residues coordinate [4Fe-4S] cluster: Cys98, Cys108, and Cys111. Residues Lys163, 473 to 476 (ELHV), 496 to 498 (FGM), and Tyr529 each bind acetyl-CoA. Residues 395 to 546 (TQCRDVRTRE…EGPYMVKRLQ (152 aa)) form the N-acetyltransferase domain.

This sequence belongs to the ELP3 family. Component of the elongator complex. [4Fe-4S] cluster serves as cofactor.

It is found in the cytoplasm. The protein localises to the nucleus. The catalysed reaction is uridine(34) in tRNA + acetyl-CoA + S-adenosyl-L-methionine + H2O = 5-(carboxymethyl)uridine(34) in tRNA + 5'-deoxyadenosine + L-methionine + CoA + 2 H(+). It functions in the pathway tRNA modification; 5-methoxycarbonylmethyl-2-thiouridine-tRNA biosynthesis. Catalytic tRNA acetyltransferase subunit of the elongator complex which is required for multiple tRNA modifications, including mcm5U (5-methoxycarbonylmethyl uridine), mcm5s2U (5-methoxycarbonylmethyl-2-thiouridine), and ncm5U (5-carbamoylmethyl uridine). In the elongator complex, acts as a tRNA uridine(34) acetyltransferase by mediating formation of carboxymethyluridine in the wobble base at position 34 in tRNAs. This chain is Elongator complex protein 3, found in Gallus gallus (Chicken).